Reading from the N-terminus, the 441-residue chain is ATP-dependent protease ATPase subunit HslU (441 aa).

ATP is bound by residues isoleucine 17, 60–65 (GVGKTE), aspartate 253, glutamate 319, and arginine 391.

It belongs to the ClpX chaperone family. HslU subfamily. In terms of assembly, a double ring-shaped homohexamer of HslV is capped on each side by a ring-shaped HslU homohexamer. The assembly of the HslU/HslV complex is dependent on binding of ATP.

It localises to the cytoplasm. ATPase subunit of a proteasome-like degradation complex; this subunit has chaperone activity. The binding of ATP and its subsequent hydrolysis by HslU are essential for unfolding of protein substrates subsequently hydrolyzed by HslV. HslU recognizes the N-terminal part of its protein substrates and unfolds these before they are guided to HslV for hydrolysis. The polypeptide is ATP-dependent protease ATPase subunit HslU (Legionella pneumophila (strain Paris)).